Here is a 72-residue protein sequence, read N- to C-terminus: Translation initiation factor IF-1 (72 aa).

The 72-residue stretch at Met1–Arg72 folds into the S1-like domain.

The protein belongs to the IF-1 family. As to quaternary structure, component of the 30S ribosomal translation pre-initiation complex which assembles on the 30S ribosome in the order IF-2 and IF-3, IF-1 and N-formylmethionyl-tRNA(fMet); mRNA recruitment can occur at any time during PIC assembly.

The protein resides in the cytoplasm. Functionally, one of the essential components for the initiation of protein synthesis. Stabilizes the binding of IF-2 and IF-3 on the 30S subunit to which N-formylmethionyl-tRNA(fMet) subsequently binds. Helps modulate mRNA selection, yielding the 30S pre-initiation complex (PIC). Upon addition of the 50S ribosomal subunit IF-1, IF-2 and IF-3 are released leaving the mature 70S translation initiation complex. This is Translation initiation factor IF-1 from Nitrosococcus oceani (strain ATCC 19707 / BCRC 17464 / JCM 30415 / NCIMB 11848 / C-107).